The following is a 164-amino-acid chain: Diphosphoinositol polyphosphate phosphohydrolase 3-beta (164 aa).

Residues Arg9, 17 to 19 (KKR), and 38 to 40 (SSR) contribute to the substrate site. The 128-residue stretch at 17–144 (KKRAACLCFR…VHAEYLEKLK (128 aa)) folds into the Nudix hydrolase domain. Gly49 and Glu65 together coordinate Mg(2+). Residues 50–71 (GGMEPEEEPGGAAVREVYEEAG) carry the Nudix box motif. Glu68 functions as the Proton acceptor in the catalytic mechanism. Glu69 serves as a coordination point for Mg(2+). Substrate contacts are provided by residues 89–91 (RKH), Arg115, and Lys133. Residues 144–164 (KLGGSPTNGNSMAPSSPDSDP) are disordered. Residues 148 to 164 (SPTNGNSMAPSSPDSDP) are compositionally biased toward polar residues.

The protein belongs to the Nudix hydrolase family. DIPP subfamily. The cofactor is Mg(2+). It depends on Mn(2+) as a cofactor. Mainly expressed in testis and, at lower level in brain. According to PubMed:12121577, it is also expressed in pancreas and weakly expressed in thymus, prostate, ovary, lung, small intestine and heart.

It localises to the cytoplasm. The enzyme catalyses diphospho-myo-inositol polyphosphate + H2O = myo-inositol polyphosphate + phosphate.. The catalysed reaction is P(1),P(6)-bis(5'-adenosyl) hexaphosphate + H2O = adenosine 5'-pentaphosphate + AMP + 2 H(+). It carries out the reaction P(1),P(5)-bis(5'-adenosyl) pentaphosphate + H2O = adenosine 5'-tetraphosphate + AMP + 2 H(+). Cleaves a beta-phosphate from the diphosphate groups in PP-InsP5 (diphosphoinositol pentakisphosphate), suggesting that it may play a role in signal transduction. Also able to catalyze the hydrolysis of dinucleoside oligophosphates, with Ap6A and Ap5A being the preferred substrates. The major reaction products are ADP and p4a from Ap6A and ADP and ATP from Ap5A. Also able to hydrolyze 5-phosphoribose 1-diphosphate. The chain is Diphosphoinositol polyphosphate phosphohydrolase 3-beta from Homo sapiens (Human).